Reading from the N-terminus, the 244-residue chain is tRNA (guanine-N(7)-)-methyltransferase (244 aa).

The disordered stretch occupies residues 1 to 24 (MTDSHVPHPESPAVEEGEERPHRR). S-adenosyl-L-methionine-binding residues include Glu-74, Glu-99, Asp-126, and Asp-149. Asp-149 is an active-site residue. Substrate-binding positions include Lys-153, Asp-185, and 222 to 225 (TKFE).

This sequence belongs to the class I-like SAM-binding methyltransferase superfamily. TrmB family.

It carries out the reaction guanosine(46) in tRNA + S-adenosyl-L-methionine = N(7)-methylguanosine(46) in tRNA + S-adenosyl-L-homocysteine. The protein operates within tRNA modification; N(7)-methylguanine-tRNA biosynthesis. In terms of biological role, catalyzes the formation of N(7)-methylguanine at position 46 (m7G46) in tRNA. In Pseudomonas syringae pv. syringae (strain B728a), this protein is tRNA (guanine-N(7)-)-methyltransferase.